The following is a 652-amino-acid chain: Sodium-dependent phosphate transporter 2 (652 aa).

At 1-5 (MAMDE) the chain is on the extracellular side. The helical transmembrane segment at 6-26 (YLWMVILGFIIAFILAFSVGA) threads the bilayer. At 27–46 (NDVANSFGTAVGSGVVTLRQ) the chain is on the cytoplasmic side. A helical membrane pass occupies residues 47–67 (ACILASIFETTGSVLLGAKVG). At 68-86 (ETIRKGIIDVNLYNETVET) the chain is on the extracellular side. N81 is a glycosylation site (N-linked (GlcNAc...) asparagine). Residues 87 to 107 (LMAGEVSAMVGSAVWQLIASF) form a helical membrane-spanning segment. Residues 108–109 (LR) lie on the Cytoplasmic side of the membrane. Residues 110–130 (LPISGTHCIVGSTIGFSLVAI) traverse the membrane as a helical segment. Over 131–142 (GTKGVQWMELVK) the chain is Extracellular. Residues 143–163 (IVASWFISPLLSGFMSGLLFV) traverse the membrane as a helical segment. At 164–190 (LIRIFILKKEDPVPNGLRALPVFYAAT) the chain is on the cytoplasmic side. Residues 191 to 211 (IAINVFSIMYTGAPVLGLVLP) traverse the membrane as a helical segment. The Extracellular portion of the chain corresponds to 212-213 (MW). A helical membrane pass occupies residues 214–234 (AIALISFGVALLFAFFVWLFV). The Cytoplasmic portion of the chain corresponds to 235 to 482 (CPWMRRKITG…EEKEEKDAPE (248 aa)). Phosphoserine occurs at positions 253, 256, 259, and 268. The segment at 273-307 (ELPGAKANDDSTIPLTGAAGETLGTSEGTSAGSHP) is disordered. Over residues 295 to 304 (LGTSEGTSAG) the composition is skewed to polar residues. A phosphoserine mark is found at S316 and S385. Residues 458–477 (SELADPDQPREDPAEEEKEE) are disordered. A helical transmembrane segment spans residues 483–503 (VHLLFHFLQVLTACFGSFAHG). Topologically, residues 504 to 530 (GNDVSNAIGPLVALWLIYKQGGVTQEA) are extracellular. Residues 531-551 (ATPVWLLFYGGVGICTGLWVW) form a helical membrane-spanning segment. The Cytoplasmic portion of the chain corresponds to 552–571 (GRRVIQTMGKDLTPITPSSG). The chain crosses the membrane as a helical span at residues 572 to 586 (FTIELASAFTVVIAS). Topologically, residues 587–593 (NIGLPVS) are extracellular. A helical transmembrane segment spans residues 594–609 (TTHCKVGSVVAVGWIR). The Cytoplasmic segment spans residues 610 to 621 (SRKAVDWRLFRN). A helical transmembrane segment spans residues 622 to 642 (IFVAWFVTVPVAGLFSAAVMA). The Extracellular portion of the chain corresponds to 643–652 (LLMYGILPYV).

This sequence belongs to the inorganic phosphate transporter (PiT) (TC 2.A.20) family. Homodimer. Ubiquitously expressed.

The protein resides in the cell membrane. It localises to the apical cell membrane. It carries out the reaction 2 Na(+)(out) + phosphate(out) = 2 Na(+)(in) + phosphate(in). Its function is as follows. Sodium-phosphate symporter which preferentially transports the monovalent form of phosphate with a stoichiometry of two sodium ions per phosphate ion. Plays a critical role in the determination of bone quality and strength by providing phosphate for bone mineralization. Required to maintain normal cerebrospinal fluid phosphate levels. Mediates phosphate-induced calcification of vascular smooth muscle cells (VCMCs) and can functionally compensate for loss of SLC20A1 in VCMCs. (Microbial infection) Functions as a retroviral receptor and confers human cells susceptibility to infection to amphotropic murine leukemia virus (A-MuLV), 10A1 murine leukemia virus (10A1 MLV) and some feline leukemia virus subgroup B (FeLV-B) variants. In Homo sapiens (Human), this protein is Sodium-dependent phosphate transporter 2 (SLC20A2).